Here is a 396-residue protein sequence, read N- to C-terminus: Period circadian protein (396 aa).

Disordered regions lie at residues 27-120, 167-188, 253-275, and 333-362; these read VTAP…APPV, SGPG…WEGE, GGNG…QYTQ, and SPSS…TSQA. Residues 93–114 show a composition bias toward gly residues; the sequence is GTSGTGNSGDGGGGGGANGTGS. Over residues 253–262 the composition is skewed to gly residues; sequence GGNGNVGSGN. Over residues 333 to 342 the composition is skewed to low complexity; the sequence is SPSSTNTNPN.

As to quaternary structure, forms a heterodimer with timeless (TIM); the complex then translocates into the nucleus. Phosphorylated with a circadian rhythmicity, probably by the double-time protein (dbt). Phosphorylation could be implicated in the stability of per monomer and in the formation of heterodimer per-tim.

It is found in the nucleus. The protein localises to the cytoplasm. The protein resides in the perinuclear region. In terms of biological role, essential for biological clock functions. Determines the period length of circadian and ultradian rhythms; an increase in PER dosage leads to shortened circadian rhythms and a decrease leads to lengthened circadian rhythms. Essential for the circadian rhythmicity of locomotor activity, eclosion behavior, and for the rhythmic component of the male courtship song that originates in the thoracic nervous system. The biological cycle depends on the rhythmic formation and nuclear localization of the TIM-PER complex. Light induces the degradation of TIM, which promotes elimination of PER. Nuclear activity of the heterodimer coordinatively regulates PER and TIM transcription through a negative feedback loop. Behaves as a negative element in circadian transcriptional loop. Does not appear to bind DNA, suggesting indirect transcriptional inhibition. The protein is Period circadian protein (per) of Drosophila paulistorum (Fruit fly).